We begin with the raw amino-acid sequence, 426 residues long: Homeobox protein knotted-1-like LET12 (426 aa).

Disordered stretches follow at residues 1 to 26 (MEFQ…QQNA), 85 to 158 (QTSN…ENSW), and 270 to 290 (GVAP…DQAD). Over residues 15-24 (QQQQQQQQQQ) the composition is skewed to low complexity. Residues 104–114 (AGGGSNGGGSG) are compositionally biased toward gly residues. Residues 139-151 (ENNNNNNNNNNNN) are compositionally biased toward low complexity. One can recognise an ELK domain in the interval 327–347 (ELKHELKQGYKEKIVDIREEI). Residues 348–411 (LRKRRAGKLP…NQRKRNWHSN (64 aa)) constitute a DNA-binding region (homeobox; TALE-type). Residues 406 to 426 (RNWHSNPSTSSSQKSQTQECR) are disordered. The span at 413–426 (STSSSQKSQTQECR) shows a compositional bias: low complexity.

The protein belongs to the TALE/KNOX homeobox family. In terms of tissue distribution, ubiquitously expressed in the mature plant.

It is found in the nucleus. Functionally, may have a role to play in formative events in ovule and embryo morphogenesis. The polypeptide is Homeobox protein knotted-1-like LET12 (LET12) (Solanum lycopersicum (Tomato)).